The chain runs to 90 residues: uncharacterized protein (90 aa).

The first 20 residues, 1-20, serve as a signal peptide directing secretion; that stretch reads MEKLFVLVFALALLAFSSDA.

It is found in the secreted. This is an uncharacterized protein from Mus musculus (Mouse).